Consider the following 305-residue polypeptide: Putative lipid kinase SAR0780 (305 aa).

The DAGKc domain occupies 3–139 (NKYTHGVLFY…YDVIKINNQY (137 aa)). Residues Ser44, 74–80 (GDGTVNE), and Thr101 each bind ATP. 3 residues coordinate Mg(2+): Ser220, Asp223, and Glu225. Glu281 functions as the Proton acceptor in the catalytic mechanism.

It belongs to the diacylglycerol/lipid kinase family. The cofactor is Mg(2+).

In terms of biological role, may catalyze the ATP-dependent phosphorylation of lipids other than diacylglycerol (DAG). In fact, is not able to exhibit diacylglycerol kinase activity in vitro. This Staphylococcus aureus (strain MRSA252) protein is Putative lipid kinase SAR0780.